A 552-amino-acid polypeptide reads, in one-letter code: Hydroxylamine reductase (552 aa).

[2Fe-2S] cluster contacts are provided by cysteine 5, cysteine 8, cysteine 20, and cysteine 27. The hybrid [4Fe-2O-2S] cluster site is built by histidine 251, glutamate 275, cysteine 319, cysteine 407, cysteine 435, cysteine 460, glutamate 494, and lysine 496. Cysteine 407 is modified (cysteine persulfide).

It belongs to the HCP family. [2Fe-2S] cluster serves as cofactor. The cofactor is hybrid [4Fe-2O-2S] cluster.

It is found in the cytoplasm. It carries out the reaction A + NH4(+) + H2O = hydroxylamine + AH2 + H(+). Catalyzes the reduction of hydroxylamine to form NH(3) and H(2)O. In Shigella boydii serotype 4 (strain Sb227), this protein is Hydroxylamine reductase.